We begin with the raw amino-acid sequence, 165 residues long: Hydroxyproline-rich systemin A (165 aa).

Positions 1–18 (MRVLFLIYLILSPFGAEA) are cleaved as a signal peptide. The propeptide occupies 19–35 (RTLLENHEGLNVGSGYG). Disordered regions lie at residues 33–70 (GYGR…TSEN) and 142–165 (YWNR…LHSY). A 4-hydroxyproline mark is found at proline 42, proline 43, proline 45, proline 49, and proline 50. O-linked (Ara...) hydroxyproline glycosylation is found at proline 42, proline 43, proline 45, proline 49, and proline 50. A propeptide spanning residues 54–143 (VSNSVSPTRT…FDSKSDERYW (90 aa)) is cleaved from the precursor. 4-hydroxyproline is present on residues proline 150, proline 151, and proline 153. O-linked (Ara...) hydroxyproline glycosylation is found at proline 150, proline 151, and proline 153. A propeptide spanning residues 162–165 (LHSY) is cleaved from the precursor.

Post-translationally, O-glycosylated; contains pentose side chains. Expressed in leaves.

It localises to the secreted. In terms of biological role, activates a lipid-based signal transduction pathway in which linolenic acid is converted to jasmonic acid, a potent activator of defense gene transcription, including proteinase inhibitors. In Nicotiana tabacum (Common tobacco), this protein is Hydroxyproline-rich systemin A.